Here is a 634-residue protein sequence, read N- to C-terminus: uncharacterized protein (634 aa).

Positions 1 to 40 (MWLQQRLKGLPGLLSSSWARRLLCLLGLLVLLLWFAGSGA) are cleaved as a signal peptide. The Extracellular portion of the chain corresponds to 41 to 589 (RRAAGGLQLL…DEHMAQQDPG (549 aa)). Asn-363 is a glycosylation site (N-linked (GlcNAc...) asparagine). A helical membrane pass occupies residues 590–610 (LPFLFWFSVASLITLFHLFLF). The Cytoplasmic portion of the chain corresponds to 611–634 (KLIYNEYCGPGAKPFFRNKEDPSV).

The protein localises to the membrane. This is an uncharacterized protein from Bos taurus (Bovine).